Reading from the N-terminus, the 101-residue chain is Osteocalcin (101 aa).

An N-terminal signal peptide occupies residues 1–18; that stretch reads MKLAIVLLLLGLAVLCLG. The propeptide occupies 19-52; the sequence is GKDSQHSASAGDSRSSEAFISRQDSANFARRHKR. In terms of domain architecture, Gla spans 53–99; the sequence is SYRYNVARGAAVTSPLESQREVCELNPDCDELADHIGFQEAYRRFYG. 4 residues coordinate Ca(2+): E69, E73, E76, and D82. A 4-carboxyglutamate mark is found at E69, E73, and E76. Cysteines 75 and 81 form a disulfide.

It belongs to the osteocalcin/matrix Gla protein family. Gamma-carboxyglutamate residues are formed by vitamin K dependent carboxylation by GGCX. These residues are essential for the binding of calcium.

The protein resides in the secreted. The carboxylated form is one of the main organic components of the bone matrix, which constitutes 1-2% of the total bone protein. The carboxylated form binds strongly to apatite and calcium. The sequence is that of Osteocalcin (bglap) from Xenopus tropicalis (Western clawed frog).